A 341-amino-acid chain; its full sequence is HTH-type transcriptional repressor PurR (341 aa).

Residues 2–56 enclose the HTH lacI-type domain; the sequence is ATIKDVAKRANVSTTTVSHVINKTRFVAEETRNAVWAAIKELHYSPSAVARSLKV. Positions 4–23 form a DNA-binding region, H-T-H motif; it reads IKDVAKRANVSTTTVSHVIN. A DNA-binding region spans residues 48–56; the sequence is SAVARSLKV. Hypoxanthine-binding residues include tyrosine 73, arginine 190, threonine 192, phenylalanine 221, and aspartate 275.

Homodimer.

It participates in purine metabolism; purine nucleotide biosynthesis [regulation]. In terms of biological role, is the main repressor of the genes involved in the de novo synthesis of purine nucleotides, regulating purB, purC, purEK, purF, purHD, purL, purMN and guaBA expression. PurR is allosterically activated to bind its cognate DNA by binding the purine corepressors, hypoxanthine or guanine, thereby effecting transcription repression. The chain is HTH-type transcriptional repressor PurR from Salmonella arizonae (strain ATCC BAA-731 / CDC346-86 / RSK2980).